Reading from the N-terminus, the 87-residue chain is Conotoxin Cl12.3 (87 aa).

The first 19 residues, 1 to 19 (MKLTCVLVVLLLFLPYGDL), serve as a signal peptide directing secretion. Residues 20–42 (ITNNYIGGAARKVTPWRRNLKTR) constitute a propeptide that is removed on maturation.

This sequence belongs to the conotoxin O1 superfamily. Post-translationally, contains 4 disulfide bonds. Expressed by the venom duct.

It localises to the secreted. The protein is Conotoxin Cl12.3 of Californiconus californicus (California cone).